Consider the following 995-residue polypeptide: Meckelin (995 aa).

Positions 1 to 36 (MATRGGAGVAMAVWSLLSARAVTAFLLLFLPRFLQA) are cleaved as a signal peptide. Residues 37 to 280 (QTFSFPFQQP…FQFIFENTAG (244 aa)) form a cysteine-rich region. The Extracellular segment spans residues 37 to 519 (QTFSFPFQQP…SVTYEMDHGE (483 aa)). Intrachain disulfides connect C49-C62, C65-C78, C80-C97, C100-C114, C117-C127, C129-C150, C153-C170, C173-C184, C186-C197, C237-C246, and C253-C268. A glycan (N-linked (GlcNAc...) asparagine) is linked at N141. The N-linked (GlcNAc...) asparagine glycan is linked to N179. N-linked (GlcNAc...) asparagine glycosylation is present at N242. Residue N318 is glycosylated (N-linked (GlcNAc...) asparagine). Residues C357 and C378 are joined by a disulfide bond. Residues 520-548 (AHVQTDIALGVLGGLAVLASLLKTAGWKR) form a helical membrane-spanning segment. The Cytoplasmic portion of the chain corresponds to 549-558 (RIGSPMIDLQ). Residues 559–590 (TVVKFLVYYAGDLANVFFIITVGTGLYWLIFF) form a helical membrane-spanning segment. The Extracellular portion of the chain corresponds to 591-603 (KAQKSVSVLLPMP). The helical transmembrane segment at 604 to 631 (IQEERFVTYVGCAFALKALQFLHKLISQ) threads the bilayer. Residues 632 to 670 (ITIDVFFIDWERPKGKVLKAVEGEGGVRSATVPVSIWRT) are Cytoplasmic-facing. The segment at residues 671–679 (YFVANEWNE) is an intramembrane region (helical). Residues 671-701 (YFVANEWNEIQTVRKINSLFQVLTVLFFLEV) form a discontinuously helical membrane-spanning segment. The stretch at 680-688 (IQTVRKINS) is an intramembrane region. Positions 689–701 (LFQVLTVLFFLEV) form an intramembrane region, helical. At 702–731 (VGFKNLALMDSSSSLSRNPPSYIAPYSCIL) the chain is on the extracellular side. The helical intramembrane region spans 732–757 (RYAVSAALWLAIGIIQVVFFAVFYER). A discontinuously helical transmembrane segment spans residues 732–771 (RYAVSAALWLAIGIIQVVFFAVFYERFIEDKIRQFVDLCS). Residues 758–762 (FIEDK) lie within the membrane without spanning it. Residues 763–771 (IRQFVDLCS) constitute an intramembrane region (helical). The Cytoplasmic portion of the chain corresponds to 772-926 (MSNISVFLLS…SIFYNDEGYS (155 aa)). Residues 828–917 (GQTFEIAISN…MEFMEPMEKS (90 aa)) adopt a coiled-coil conformation. Residues 927–929 (FSS) constitute an intramembrane region (helical). A discontinuously helical transmembrane segment spans residues 927–952 (FSSVLYYGNEATLLIFDLLFFCVVDL). An intramembrane segment occupies 930–936 (VLYYGNE). The segment at residues 937–952 (ATLLIFDLLFFCVVDL) is an intramembrane region (helical). The Extracellular portion of the chain corresponds to 953–957 (ACQNF). A helical membrane pass occupies residues 958–985 (ILASFLTYLQQEIFRYIRNTVGQKNLAS). The Cytoplasmic portion of the chain corresponds to 986–995 (KTLVDQRFLI).

As to quaternary structure, homodimer. Part of the tectonic-like complex (also named B9 complex). Interacts with DNAJB9, DNAJC10 and mutated SFTPC. Interacts with SYNE2 during the early establishment of cell polarity. Interacts (via C-terminus) with FLNA. Interacts with TMEM218. Interacts with WNT5A. Interacts with ROR2. As to expression, widely expressed in adult and fetal tissues. Expressed at higher level in spinal cord.

The protein resides in the cell membrane. It is found in the endoplasmic reticulum membrane. The protein localises to the cell projection. Its subcellular location is the cilium. It localises to the cytoplasm. The protein resides in the cytoskeleton. It is found in the cilium basal body. In terms of biological role, required for ciliary structure and function. Part of the tectonic-like complex which is required for tissue-specific ciliogenesis and may regulate ciliary membrane composition. Involved in centrosome migration to the apical cell surface during early ciliogenesis. Involved in the regulation of cilia length and appropriate number through the control of centrosome duplication. Is a key regulator of stereociliary bundle orientation. Required for epithelial cell branching morphology. Essential for endoplasmic reticulum-associated degradation (ERAD) of surfactant protein C (SFTPC). Involved in the negative regulation of canonical Wnt signaling, and activation of the non-canonical cascade stimulated by WNT5A. In non-canonical Wnt signaling, it may act as ROR2 coreceptor. This Homo sapiens (Human) protein is Meckelin (TMEM67).